Reading from the N-terminus, the 107-residue chain is MIPGEYDIKDGEITLNENRKTLTLTVANTGDRPIQVGSHYHFFETNPALSFSRDATRGFRLNIAAGTAVRFEPGQDREVELVEIAGDKTVYGFRGEIMGELEGGSHE.

Belongs to the urease beta subunit family. In terms of assembly, heterotrimer of UreA (gamma), UreB (beta) and UreC (alpha) subunits. Three heterotrimers associate to form the active enzyme.

Its subcellular location is the cytoplasm. It carries out the reaction urea + 2 H2O + H(+) = hydrogencarbonate + 2 NH4(+). The protein operates within nitrogen metabolism; urea degradation; CO(2) and NH(3) from urea (urease route): step 1/1. This chain is Urease subunit beta, found in Teredinibacter turnerae (strain ATCC 39867 / T7901).